The chain runs to 122 residues: Large ribosomal subunit protein uL14 (122 aa).

Belongs to the universal ribosomal protein uL14 family. As to quaternary structure, part of the 50S ribosomal subunit. Forms a cluster with proteins L3 and L19. In the 70S ribosome, L14 and L19 interact and together make contacts with the 16S rRNA in bridges B5 and B8.

Functionally, binds to 23S rRNA. Forms part of two intersubunit bridges in the 70S ribosome. The chain is Large ribosomal subunit protein uL14 from Solibacter usitatus (strain Ellin6076).